The sequence spans 107 residues: Phosphoribosyl-ATP pyrophosphatase (107 aa).

It belongs to the PRA-PH family.

The protein resides in the cytoplasm. It catalyses the reaction 1-(5-phospho-beta-D-ribosyl)-ATP + H2O = 1-(5-phospho-beta-D-ribosyl)-5'-AMP + diphosphate + H(+). The protein operates within amino-acid biosynthesis; L-histidine biosynthesis; L-histidine from 5-phospho-alpha-D-ribose 1-diphosphate: step 2/9. This chain is Phosphoribosyl-ATP pyrophosphatase, found in Brucella abortus (strain S19).